Reading from the N-terminus, the 402-residue chain is Zinc finger protein 809 (402 aa).

In terms of domain architecture, KRAB spans 4–75 (VSFEDVAVDF…AEASSRSLPG (72 aa)). A disordered region spans residues 118 to 139 (QEVSKGTTSRHRRAPVKSLCRK). A compositionally biased stretch (basic residues) spans 125-139 (TSRHRRAPVKSLCRK). C2H2-type zinc fingers lie at residues 155-178 (YECK…RRTH), 184-206 (YECD…QKTH), 213-235 (YECS…ERTH), 241-263 (YECT…KKTH), 269-291 (FKCE…QKKH), 297-319 (YECT…RIAH), and 325-347 (YECK…QKRH).

It belongs to the krueppel C2H2-type zinc-finger protein family.

The protein localises to the nucleus. Transcription factor specifically required to repress retrotransposons in embryonic stem cells. Recognizes and binds retroviral DNA sequences from a large subset of mammalian retroviruses and retroelements and repress their expression by recruiting a repressive complex containing TRIM28/KAP1. The polypeptide is Zinc finger protein 809 (Mus musculus (Mouse)).